The primary structure comprises 391 residues: 8-amino-7-oxononanoate synthase (391 aa).

Arg20 provides a ligand contact to substrate. 106–107 (GY) contributes to the pyridoxal 5'-phosphate binding site. His131 serves as a coordination point for substrate. 3 residues coordinate pyridoxal 5'-phosphate: Ser178, His206, and Thr234. The residue at position 237 (Lys237) is an N6-(pyridoxal phosphate)lysine. Substrate is bound at residue Thr353.

It belongs to the class-II pyridoxal-phosphate-dependent aminotransferase family. BioF subfamily. Homodimer. Pyridoxal 5'-phosphate is required as a cofactor.

The enzyme catalyses 6-carboxyhexanoyl-[ACP] + L-alanine + H(+) = (8S)-8-amino-7-oxononanoate + holo-[ACP] + CO2. The protein operates within cofactor biosynthesis; biotin biosynthesis. Catalyzes the decarboxylative condensation of pimeloyl-[acyl-carrier protein] and L-alanine to produce 8-amino-7-oxononanoate (AON), [acyl-carrier protein], and carbon dioxide. This Trichlorobacter lovleyi (strain ATCC BAA-1151 / DSM 17278 / SZ) (Geobacter lovleyi) protein is 8-amino-7-oxononanoate synthase.